The primary structure comprises 434 residues: Putative magnesium transporter MRS2-D (434 aa).

Disordered regions lie at residues 1–21 (MAARRRHVAAGAGAPAPAAGE), 126–171 (AASP…DGEA), and 279–311 (EASELEDHSSRDEEGVEGGGGGDGDDETIAGGG). The segment covering 9-21 (AAGAGAPAPAAGE) has biased composition (low complexity). A compositionally biased stretch (basic and acidic residues) spans 279 to 291 (EASELEDHSSRDE). 2 helical membrane-spanning segments follow: residues 367-387 (GILLSTGTLVSSCAIAVTGVF) and 405-425 (FPCAAAGIVAGSLALYLAALL).

It belongs to the CorA metal ion transporter (MIT) (TC 1.A.35.5) family.

It localises to the membrane. Functionally, putative magnesium transporter. This Oryza sativa subsp. indica (Rice) protein is Putative magnesium transporter MRS2-D (MRS2-D).